The following is a 752-amino-acid chain: Complement C2 (752 aa).

The signal sequence occupies residues 1–20 (MGPLMVLFCLLFLYPGLADS). Sushi domains follow at residues 22–86 (PSCP…VCKP), 87–146 (VRCP…VCDN), and 149–206 (GHCP…ICRQ). Disulfide bonds link Cys-24–Cys-64, Cys-51–Cys-84, Cys-89–Cys-131, Cys-117–Cys-144, Cys-151–Cys-191, and Cys-177–Cys-204. The N-linked (GlcNAc...) asparagine glycan is linked to Asn-29. Asn-112 is a glycosylation site (N-linked (GlcNAc...) asparagine). The VWFA domain maps to 254-452 (NLYLLLDCSQ…KALHQVFEHM (199 aa)). The MIDAS-like motif signature appears at 260 to 264 (DCSQS). Mg(2+)-binding residues include Ser-262 and Ser-264. Positions 262 and 264 each coordinate Mn(2+). Residues Asn-290 and Asn-333 are each glycosylated (N-linked (GlcNAc...) asparagine). A Mg(2+)-binding site is contributed by Thr-337. Thr-337 contributes to the Mn(2+) binding site. 3 disulfide bridges follow: Cys-463–Cys-581, Cys-492–Cys-508, and Cys-584–Cys-600. Positions 464-744 (GVGNMSANAS…MQPWLRQHLG (281 aa)) constitute a Peptidase S1 domain. 2 N-linked (GlcNAc...) asparagine glycosylation sites follow: Asn-467 and Asn-471. Catalysis depends on charge relay system residues His-507 and Asp-561. Asn-621 is a glycosylation site (N-linked (GlcNAc...) asparagine). Intrachain disulfides connect Cys-638-Cys-665 and Cys-675-Cys-705. Asn-651 carries an N-linked (GlcNAc...) (complex) asparagine glycan. Residue Ser-679 is the Charge relay system of the active site.

This sequence belongs to the peptidase S1 family. In terms of assembly, serine protease component of the C3 convertase, also named C4bC2b, composed of the serine protease complement C2b and complement C4b. Serine protease component of the C5 convertase, also named C4bC2bC3b, composed of the serine protease complement C2b, complement C3b, as well as complement C4b. As to quaternary structure, (Microbial infection) Interacts with Schistosoma haematobium TOR (via N-terminal extracellular domain). This results in inhibition of the classical and lectin pathway of complement activation, probably due to interference with binding of C2a to C4b such that C3 convertase cannot be formed. This infers resistance to complement-mediated cell lysis, allowing parasite survival and infection. Mg(2+) is required as a cofactor. It depends on Mn(2+) as a cofactor. In terms of processing, cleaved and activated by different proteases depending on the complement pathway to generate complement C2a and serine protease complement C2b chains. Cleaved and activated by C1S following activation by the classical complement system. Cleaved and activated by MASP2 following activation by the lectin complement system. Cleaved and activated by GZMK following activation by the GZMK complement system.

Its subcellular location is the secreted. The protein resides in the cell surface. The enzyme catalyses Selective cleavage of Arg-|-Ser bond in complement component C3 alpha-chain to form C3a and C3b, and Arg-|-Xaa bond in complement component C5 alpha-chain to form C5a and C5b.. Precursor of the catalytic component of the C3 and C5 convertase complexes, which are part of the complement pathway, a cascade of proteins that leads to phagocytosis and breakdown of pathogens and signaling that strengthens the adaptive immune system. Component C2 is part of the classical, lectin and GZMK complement systems. Functionally, catalytic component of the complement C3 and C5 convertase complexes. Following complement activation, recruited to the surface of pathogens by complement C4b opsonin to form the C3 convertase, or C3b and C4b opsonins to form the C5 convertase. As part of the C3 convertase, cleaves and activate C3 into C3a anaphylatoxin and C3b opsonin, the next components of the complement pathways. As part of the C5 convertase, cleaves and activate C5 into C5a anaphylatoxin and C5b component of the membrane attack complex. This is Complement C2 from Homo sapiens (Human).